We begin with the raw amino-acid sequence, 251 residues long: tRNA (guanine-N(7)-)-methyltransferase (251 aa).

Residues 1–29 (MTQTLSSQDPQAPAAPPMPGAAGSAPADV) form a disordered region. 4 residues coordinate S-adenosyl-L-methionine: E84, E109, D136, and D159. Residue D159 is part of the active site. Residue K163 participates in substrate binding. Positions 165–170 (RHNKRR) are interaction with RNA. Residues D195 and 230–233 (TKFE) contribute to the substrate site.

It belongs to the class I-like SAM-binding methyltransferase superfamily. TrmB family.

It catalyses the reaction guanosine(46) in tRNA + S-adenosyl-L-methionine = N(7)-methylguanosine(46) in tRNA + S-adenosyl-L-homocysteine. The protein operates within tRNA modification; N(7)-methylguanine-tRNA biosynthesis. Functionally, catalyzes the formation of N(7)-methylguanine at position 46 (m7G46) in tRNA. The protein is tRNA (guanine-N(7)-)-methyltransferase of Acidovorax sp. (strain JS42).